The sequence spans 112 residues: 2Fe-2S ferredoxin (112 aa).

One can recognise a 2Fe-2S ferredoxin-type domain in the interval 5-107 (IKVTFIINDG…GIKVRIPATT (103 aa)). [2Fe-2S] cluster is bound by residues Cys42, Cys48, Cys51, and Cys88.

Belongs to the adrenodoxin/putidaredoxin family. [2Fe-2S] cluster serves as cofactor.

Its function is as follows. Ferredoxin are iron-sulfur proteins that transfer electrons in a wide variety of metabolic reactions. This chain is 2Fe-2S ferredoxin (fdxB), found in Rickettsia conorii (strain ATCC VR-613 / Malish 7).